Reading from the N-terminus, the 291-residue chain is Formamidopyrimidine-DNA glycosylase (291 aa).

The active-site Schiff-base intermediate with DNA is P2. Residue E3 is the Proton donor of the active site. Residue K58 is the Proton donor; for beta-elimination activity of the active site. DNA-binding residues include H104, R127, and R172. Residues 257–291 (FVYDRAGLPCRACGTPIRQIVQGQRSTFCCPTCQR) form an FPG-type zinc finger. The Proton donor; for delta-elimination activity role is filled by R281.

The protein belongs to the FPG family. Monomer. The cofactor is Zn(2+).

It carries out the reaction Hydrolysis of DNA containing ring-opened 7-methylguanine residues, releasing 2,6-diamino-4-hydroxy-5-(N-methyl)formamidopyrimidine.. The catalysed reaction is 2'-deoxyribonucleotide-(2'-deoxyribose 5'-phosphate)-2'-deoxyribonucleotide-DNA = a 3'-end 2'-deoxyribonucleotide-(2,3-dehydro-2,3-deoxyribose 5'-phosphate)-DNA + a 5'-end 5'-phospho-2'-deoxyribonucleoside-DNA + H(+). Its function is as follows. Involved in base excision repair of DNA damaged by oxidation or by mutagenic agents. Acts as a DNA glycosylase that recognizes and removes damaged bases. Has a preference for oxidized purines, such as 7,8-dihydro-8-oxoguanine (8-oxoG). Has AP (apurinic/apyrimidinic) lyase activity and introduces nicks in the DNA strand. Cleaves the DNA backbone by beta-delta elimination to generate a single-strand break at the site of the removed base with both 3'- and 5'-phosphates. This chain is Formamidopyrimidine-DNA glycosylase, found in Ralstonia pickettii (strain 12J).